A 65-amino-acid chain; its full sequence is Small ribosomal subunit protein bS21 (65 aa).

It belongs to the bacterial ribosomal protein bS21 family.

The polypeptide is Small ribosomal subunit protein bS21 (Chlorobaculum parvum (strain DSM 263 / NCIMB 8327) (Chlorobium vibrioforme subsp. thiosulfatophilum)).